A 431-amino-acid chain; its full sequence is UPF0597 protein BVU_2091 (431 aa).

The protein belongs to the UPF0597 family.

The protein is UPF0597 protein BVU_2091 of Phocaeicola vulgatus (strain ATCC 8482 / DSM 1447 / JCM 5826 / CCUG 4940 / NBRC 14291 / NCTC 11154) (Bacteroides vulgatus).